The following is a 618-amino-acid chain: Chaperone protein DnaK (618 aa).

Phosphothreonine; by autocatalysis is present on Thr175. Residues 579 to 618 (GAPGAEGFDSNMAGEANAGQNANNDDNVVDADYKVEDDEK) form a disordered region. Over residues 591 to 604 (AGEANAGQNANNDD) the composition is skewed to low complexity.

This sequence belongs to the heat shock protein 70 family.

Its function is as follows. Acts as a chaperone. The protein is Chaperone protein DnaK of Clostridium tetani (strain Massachusetts / E88).